Here is a 579-residue protein sequence, read N- to C-terminus: Zinc metalloproteinase nas-11 (579 aa).

A signal peptide spans 1–17 (MTPSLVFLIVVIVVVEG). The propeptide occupies 18–328 (QGWRPWDRFN…AAPGSSRLKK (311 aa)). The tract at residues 35–58 (WGGNNWGTRQRNQEPHDIPPPVPP) is disordered. N256 carries N-linked (GlcNAc...) asparagine glycosylation. Over residues 293–312 (GDDEIPLPDADTDDEDDDDS) the composition is skewed to acidic residues. The segment at 293–323 (GDDEIPLPDADTDDEDDDDSTNSASGAAPGS) is disordered. The 208-residue stretch at 329-536 (SALYFEGNLI…IELLKKMYCQ (208 aa)) folds into the Peptidase M12A domain. Cystine bridges form between C375–C535, C401–C421, C539–C575, C546–C568, and C555–C572. H430 serves as a coordination point for Zn(2+). The active site involves E431. The Zn(2+) site is built by H434 and H440. N454 is a glycosylation site (N-linked (GlcNAc...) asparagine). Residues 539–575 (CDDKNVYCGAWALKDLCKNPGHDQYMAANCKKSCGLC) form the ShKT domain.

The cofactor is Zn(2+). In terms of tissue distribution, expressed in the anterior part of the intestine, CEP neurons and to a lesser extent in hypodermis.

Its subcellular location is the secreted. Its function is as follows. Metalloprotease. This chain is Zinc metalloproteinase nas-11 (nas-11), found in Caenorhabditis elegans.